Reading from the N-terminus, the 294-residue chain is Protein CHLOROPLAST J-LIKE DOMAIN 1, chloroplastic (294 aa).

The transit peptide at 1–58 (MAPALSTSCSSVMAFSTSNALRYHHPQISLRNSLRAPKSPSFVRLPLGKVLQSRIVIR) directs the protein to the chloroplast. Over 59–164 (AASSAAGNPQ…GPRFSRSSKN (106 aa)) the chain is Stromal. The tract at residues 74 to 152 (NPYEVLGVNP…IKYADKQPII (79 aa)) is J-like domain. The helical transmembrane segment at 165 to 182 (DMLINLAISVVFSAWIAI) threads the bilayer. The Chloroplast intermembrane portion of the chain corresponds to 183-233 (KRNVEYKPLQFMSFVFVYRIFEKLKSFEAPSSPIYNEEGEESGRGLRMGKR). The chain crosses the membrane as a helical span at residues 234–256 (LLRSLSLVFGSILLASLAYTGFL). Residues 257 to 275 (NGIEYMGYSIPMVLYNNQE) are Stromal-facing. A helical membrane pass occupies residues 276-293 (LIVTASSAFMLYVIASFY). A topological domain (chloroplast intermembrane) is located at residue Arg-294.

In terms of assembly, interacts (via J-like domain) with ARC6 (via J domain).

Its subcellular location is the plastid. The protein resides in the chloroplast inner membrane. Probably involved in the regulation of the fatty acid metabolic process in chloroplasts, especially chloroplastic galactolipids monogalactosyldiacylglycerol (MGDG) and digalactosyldiacylglycerol (DGDG). The protein is Protein CHLOROPLAST J-LIKE DOMAIN 1, chloroplastic of Arabidopsis thaliana (Mouse-ear cress).